The sequence spans 704 residues: Urea-proton symporter DUR3 (704 aa).

The next 15 helical transmembrane spans lie at 39–59 (YAVI…LVWL), 80–100 (VKTG…ATIL), 115–135 (FWYA…AIEI), 159–179 (IVFL…LLLG), 192–212 (LYAA…AGGL), 216–236 (FLAS…FVFL), 291–311 (SSGG…TVFV), 336–356 (LVWF…ALAL), 388–408 (LTML…AVSS), 435–455 (AVLG…KAGV), 461–481 (YLAM…MLLW), 486–506 (AFGA…TWLT), 527–547 (LAGN…CSLV), 590–610 (AWIV…WPVL), and 622–642 (FWFW…VIIG).

The protein belongs to the sodium:solute symporter (SSF) (TC 2.A.21) family. In terms of tissue distribution, expressed in root rhizodermis, including root hairs and cortex in more basal root zones. Expressed in shoots.

The protein localises to the cell membrane. Its function is as follows. High-affinity urea-proton symporter involved in the active transport of urea across the plasma membrane into root cells. May play an important role in urea uptake by plant cells at low external urea concentrations. This Arabidopsis thaliana (Mouse-ear cress) protein is Urea-proton symporter DUR3 (DUR3).